The sequence spans 198 residues: Recombination protein RecR (198 aa).

The segment at 57–72 (CSICGNLTDDDPCHIC) adopts a C4-type zinc-finger fold. One can recognise a Toprim domain in the interval 80 to 175 (EIILVVEDSK…KVTRLARGLA (96 aa)).

The protein belongs to the RecR family.

Its function is as follows. May play a role in DNA repair. It seems to be involved in an RecBC-independent recombinational process of DNA repair. It may act with RecF and RecO. This is Recombination protein RecR from Streptococcus equi subsp. equi (strain 4047).